Reading from the N-terminus, the 398-residue chain is Subtilisin-like serine protease EN45_076310 (398 aa).

The N-terminal stretch at 1 to 19 (MGFLKLLSTSLATLAVVNA) is a signal peptide. Positions 20–115 (GKLLTANDGD…VEPDMVVNAT (96 aa)) are cleaved as a propeptide — removed in mature form. The Inhibitor I9 domain maps to 35–113 (SYIVVMNDGV…KYVEPDMVVN (79 aa)). Asn-113 carries N-linked (GlcNAc...) asparagine glycosylation. The tract at residues 124-134 (PSWGLSRISSK) is igE-binding. The region spanning 125–398 (SWGLSRISSK…KLLYNGINAQ (274 aa)) is the Peptidase S8 domain. Asp-157 functions as the Charge relay system in the catalytic mechanism. Residues 163–170 (GHADFGGR) form an igE-binding region. A disordered region spans residues 175–195 (TNTADNDDTDGNGHGTHTAST). His-188 functions as the Charge relay system in the catalytic mechanism. The tract at residues 227–245 (IAGMDWAVKDSKSRGATGK) is igE-binding. An N-linked (GlcNAc...) asparagine glycan is attached at Asn-249. The segment at 310–318 (SFTNFGSVV) is igE-binding. Ser-343 acts as the Charge relay system in catalysis.

Belongs to the peptidase S8 family.

It localises to the secreted. With respect to regulation, inhibited by phenylmethanesulfonyl fluoride (PMSF) and diethyl pyrocarbonate (DEPC), but not by benzamidine. Its function is as follows. Serine protease that hydrolyzes casein, gelatin and human collagen type IV, but not elastin in vitro. Hydrolyzes OCLN of the human lung epithelial cells at 202-Gln-|-Ser-203 and Gln-211-|-Ile-212. The sequence is that of Subtilisin-like serine protease EN45_076310 from Penicillium chrysogenum (Penicillium notatum).